Here is a 520-residue protein sequence, read N- to C-terminus: Pantetheine hydrolase VNN2 (520 aa).

Positions 1-22 (MVTSSFPISVAVFALITLQVGT) are cleaved as a signal peptide. Residues 31–306 (YEHAVILPNK…GKLLLSEVDS (276 aa)) enclose the CN hydrolase domain. N-linked (GlcNAc...) asparagine glycosylation is present at asparagine 39. The Proton acceptor role is filled by glutamate 80. Lysine 179 functions as the Proton donor in the catalytic mechanism. Cysteine 211 functions as the Nucleophile in the catalytic mechanism. N-linked (GlcNAc...) asparagine glycans are attached at residues asparagine 273, asparagine 347, asparagine 357, asparagine 411, and asparagine 468. Cysteine 493 is lipidated: GPI-anchor amidated cysteine. The propeptide at 494-520 (GTSNSAITYLLIFILLMIIALQNIVML) is removed in mature form.

This sequence belongs to the carbon-nitrogen hydrolase superfamily. BTD/VNN family. Widely expressed with higher expression in spleen and blood.

Its subcellular location is the cell membrane. It catalyses the reaction (R)-pantetheine + H2O = cysteamine + (R)-pantothenate. Functionally, amidohydrolase that hydrolyzes specifically one of the carboamide linkages in D-pantetheine thus recycling pantothenic acid (vitamin B5) and releasing cysteamine. Involved in the thymus homing of bone marrow cells. May regulate beta-2 integrin-mediated cell adhesion, migration and motility of neutrophil. The chain is Pantetheine hydrolase VNN2 from Homo sapiens (Human).